Here is a 1200-residue protein sequence, read N- to C-terminus: uncharacterized protein (1200 aa).

Disordered stretches follow at residues 282 to 302, 323 to 372, 392 to 491, 510 to 568, and 1056 to 1200; these read SQES…GCTS, LSEA…PQGS, SQEP…KASL, RAKS…RIGA, and SCPE…LASL. Over residues 420-435 the composition is skewed to low complexity; that stretch reads ASSPRLSPASPAAAAS. Positions 437-448 are enriched in basic and acidic residues; that stretch reads TKIEVKTKERNG. Polar residues predominate over residues 518–527; sequence GTTQTKTSGP. Residues 1137–1153 show a composition bias toward basic and acidic residues; sequence EDGKGSHKLPDPAREHL. The segment covering 1160–1171 has biased composition (low complexity); it reads RQQPPRQSQVPR. Residues 1175–1200 show a composition bias toward polar residues; that stretch reads GSFSSEGTDSQTSLEDSPQTSPLASL.

This is an uncharacterized protein from Homo sapiens (Human).